Consider the following 509-residue polypeptide: GMP synthase [glutamine-hydrolyzing] (509 aa).

The region spanning 4–194 (LVLVVDFGGQ…LYNICGLENS (191 aa)) is the Glutamine amidotransferase type-1 domain. Catalysis depends on Cys81, which acts as the Nucleophile. Active-site residues include His168 and Glu170. A GMPS ATP-PPase domain is found at 195–384 (WSMASFAEEK…LGIPHHLVWR (190 aa)). 222-228 (SGGVDSS) is a binding site for ATP.

Homodimer.

It carries out the reaction XMP + L-glutamine + ATP + H2O = GMP + L-glutamate + AMP + diphosphate + 2 H(+). The protein operates within purine metabolism; GMP biosynthesis; GMP from XMP (L-Gln route): step 1/1. In terms of biological role, catalyzes the synthesis of GMP from XMP. In Clostridium perfringens (strain 13 / Type A), this protein is GMP synthase [glutamine-hydrolyzing].